The following is a 314-amino-acid chain: 4-hydroxy-3-methylbut-2-enyl diphosphate reductase (314 aa).

Cys-12 is a binding site for [4Fe-4S] cluster. Positions 43 and 81 each coordinate (2E)-4-hydroxy-3-methylbut-2-enyl diphosphate. His-43 and His-81 together coordinate dimethylallyl diphosphate. The isopentenyl diphosphate site is built by His-43 and His-81. A [4Fe-4S] cluster-binding site is contributed by Cys-103. His-131 lines the (2E)-4-hydroxy-3-methylbut-2-enyl diphosphate pocket. His-131 contributes to the dimethylallyl diphosphate binding site. His-131 is an isopentenyl diphosphate binding site. Residue Glu-133 is the Proton donor of the active site. A (2E)-4-hydroxy-3-methylbut-2-enyl diphosphate-binding site is contributed by Thr-170. Cys-198 serves as a coordination point for [4Fe-4S] cluster. Ser-226, Asn-228, and Ser-271 together coordinate (2E)-4-hydroxy-3-methylbut-2-enyl diphosphate. Dimethylallyl diphosphate is bound by residues Ser-226, Asn-228, and Ser-271. Ser-226, Asn-228, and Ser-271 together coordinate isopentenyl diphosphate.

It belongs to the IspH family. It depends on [4Fe-4S] cluster as a cofactor.

It carries out the reaction isopentenyl diphosphate + 2 oxidized [2Fe-2S]-[ferredoxin] + H2O = (2E)-4-hydroxy-3-methylbut-2-enyl diphosphate + 2 reduced [2Fe-2S]-[ferredoxin] + 2 H(+). The catalysed reaction is dimethylallyl diphosphate + 2 oxidized [2Fe-2S]-[ferredoxin] + H2O = (2E)-4-hydroxy-3-methylbut-2-enyl diphosphate + 2 reduced [2Fe-2S]-[ferredoxin] + 2 H(+). It participates in isoprenoid biosynthesis; dimethylallyl diphosphate biosynthesis; dimethylallyl diphosphate from (2E)-4-hydroxy-3-methylbutenyl diphosphate: step 1/1. The protein operates within isoprenoid biosynthesis; isopentenyl diphosphate biosynthesis via DXP pathway; isopentenyl diphosphate from 1-deoxy-D-xylulose 5-phosphate: step 6/6. Functionally, catalyzes the conversion of 1-hydroxy-2-methyl-2-(E)-butenyl 4-diphosphate (HMBPP) into a mixture of isopentenyl diphosphate (IPP) and dimethylallyl diphosphate (DMAPP). Acts in the terminal step of the DOXP/MEP pathway for isoprenoid precursor biosynthesis. This Shouchella clausii (strain KSM-K16) (Alkalihalobacillus clausii) protein is 4-hydroxy-3-methylbut-2-enyl diphosphate reductase.